Reading from the N-terminus, the 127-residue chain is MVCLLILGLVLEQVQVEGKSCCRSTLGRNCYNLCRVRGAQKLCAGVCRCKLTSSGKCPTGFPKLALVSNSDEPDTVKYCNLGCRASMCDYMVNAAADDEEMKLYLENCGDACVNFCNGDAGLTSLTA.

Residues 1–18 (MVCLLILGLVLEQVQVEG) form the signal peptide. Cystine bridges form between cysteine 21-cysteine 57, cysteine 22-cysteine 49, cysteine 30-cysteine 47, and cysteine 34-cysteine 43. The propeptide at 64 to 127 (LALVSNSDEP…GDAGLTSLTA (64 aa)) is acidic domain.

It belongs to the plant thionin (TC 1.C.44) family. 4 C-C subfamily.

The protein localises to the secreted. Its function is as follows. Thionins are small plant proteins which are toxic to animal cells. They seem to exert their toxic effect at the level of the cell membrane. Their precise function is not known. This Hordeum vulgare (Barley) protein is Alpha-hordothionin (THI1.1).